A 398-amino-acid chain; its full sequence is Chalcone synthase 1 (398 aa).

Cysteine 167 is a catalytic residue.

Belongs to the thiolase-like superfamily. Chalcone/stilbene synthases family.

The enzyme catalyses (E)-4-coumaroyl-CoA + 3 malonyl-CoA + 3 H(+) = 2',4,4',6'-tetrahydroxychalcone + 3 CO2 + 4 CoA. The protein operates within secondary metabolite biosynthesis; flavonoid biosynthesis. Functionally, the primary product of this enzyme is 4,2',4',6'-tetrahydroxychalcone (also termed naringenin-chalcone or chalcone) which can under specific conditions spontaneously isomerize into naringenin. This Gerbera hybrida (Daisy) protein is Chalcone synthase 1 (CHS1).